The primary structure comprises 293 residues: uncharacterized protein (293 aa).

Disordered stretches follow at residues 121–154 and 254–274; these read NLNF…SQNS and DILQ…PQQQ. Over residues 133–149 the composition is skewed to basic residues; it reads SYHHHSHSHSHHSHSHS. The span at 260-272 shows a compositional bias: pro residues; sequence PPSPTPTPPPPPQ.

This is an uncharacterized protein from Dictyostelium discoideum (Social amoeba).